The sequence spans 315 residues: Shiga-like toxin 1 subunit A (315 aa).

An N-terminal signal peptide occupies residues 1-22 (MKIIIFRVLTFFFVIFSVNVVA). An A1 region spans residues 23–273 (KEFTLDFSTA…CHHHASRVAR (251 aa)). Glu-189 is an active-site residue. Cys-264 and Cys-283 are disulfide-bonded. The segment at 274–315 (MASDEFPSMCPADGRVRGITHNKILWDSSTLGAILMRRTISS) is A2.

This sequence belongs to the ribosome-inactivating protein family. In terms of assembly, shiga-like toxin contains a single subunit A and five copies of subunit B.

The protein resides in the secreted. The enzyme catalyses Endohydrolysis of the N-glycosidic bond at one specific adenosine on the 28S rRNA.. The A subunit is responsible for inhibiting protein synthesis through the catalytic inactivation of 60S ribosomal subunits. After endocytosis, the A subunit is cleaved by furin in two fragments, A1 and A2: A1 is the catalytically active fragment, and A2 is essential for holotoxin assembly with the B subunits. The protein is Shiga-like toxin 1 subunit A (stxA) of Escherichia coli (Bacteriophage H19B).